The chain runs to 505 residues: MNWENVRVRVAPSPTGDPHVGTAYMALFNEIFAKRFKGKMILRIEDTDRTRSRQDYEENIFSALRWCGIQWDEGPDVGGPYGPYRQSERTKIYQGYVETLLKTDCAYKCFATPQELAEMRAVASTLGYRGGYDRRYRYLSPEEVASREAAGQPYTIRLKVPLSGECVFEDYSKGRVVFPWADVDDQVLVKSDGFPTYHFANVIDDHLMGITHVLRGEEWLSSTPKHLLLYEAFGWEPPVFLHMPLLLNPDGTKLSKRKNPTSIFYYRDSGYVKEAFVNFLTLMGYSMEGDEEVYSLERIIETFNPRRIGKSGAVFDIQKLDWMNKHYLNHEGSPECLLKELQGWLLNDEFFLKILPLCQSRITTLAEFINLTSFFFSGLLEYRVEELLPQALSPEKAAILLYSYVKYLEKTDQWTKETCYLGSKWLAQAFNVHHKKAIIPLLYVAITGKKQGLPLFDSIEILGKPRARARLVYAEKLLGGVPKKLAATVDKFMQREDFEEATFDL.

The short motif at P12–T22 is the 'HIGH' region element. A 'KMSKS' region motif is present at residues K253–R257. K256 serves as a coordination point for ATP.

Belongs to the class-I aminoacyl-tRNA synthetase family. Glutamate--tRNA ligase type 1 subfamily. In terms of assembly, monomer.

It is found in the cytoplasm. It catalyses the reaction tRNA(Glu) + L-glutamate + ATP = L-glutamyl-tRNA(Glu) + AMP + diphosphate. Functionally, catalyzes the attachment of glutamate to tRNA(Glu) in a two-step reaction: glutamate is first activated by ATP to form Glu-AMP and then transferred to the acceptor end of tRNA(Glu). This Chlamydia pneumoniae (Chlamydophila pneumoniae) protein is Glutamate--tRNA ligase.